We begin with the raw amino-acid sequence, 108 residues long: Class I hydrophobin 3 (108 aa).

An N-terminal signal peptide occupies residues 1–17 (MFFQTTIVAALASLAVA). Disulfide bonds link Cys28/Cys87, Cys35/Cys81, Cys36/Cys69, and Cys88/Cys101. Residue Asn37 is glycosylated (N-linked (GlcNAc...) asparagine).

It belongs to the fungal hydrophobin family. As to quaternary structure, self-assembles to form functional amyloid fibrils called rodlets. Self-assembly into fibrillar rodlets occurs spontaneously at hydrophobic:hydrophilic interfaces and the rodlets further associate laterally to form amphipathic monolayers.

Its subcellular location is the secreted. The protein resides in the cell wall. Functionally, aerial growth, conidiation, and dispersal of filamentous fungi in the environment rely upon a capability of their secreting small amphipathic proteins called hydrophobins (HPBs) with low sequence identity. Class I can self-assemble into an outermost layer of rodlet bundles on aerial cell surfaces, conferring cellular hydrophobicity that supports fungal growth, development and dispersal; whereas Class II form highly ordered films at water-air interfaces through intermolecular interactions but contribute nothing to the rodlet structure. Vmh3 is a class I hydrophobin that is essential for the maintenance of the surface hydrophobicity of the mycelium and might be involved in the development of fruiting bodies. Plays an important role in hyphal resistance against environmental stress. Necessary for the efficient biodegradation of lignin. The protein is Class I hydrophobin 3 of Pleurotus ostreatus (strain PC15) (Oyster mushroom).